Reading from the N-terminus, the 513-residue chain is ATP synthase subunit alpha (513 aa).

Position 169-176 (169-176 (GDRQTGKT)) interacts with ATP.

It belongs to the ATPase alpha/beta chains family. F-type ATPases have 2 components, CF(1) - the catalytic core - and CF(0) - the membrane proton channel. CF(1) has five subunits: alpha(3), beta(3), gamma(1), delta(1), epsilon(1). CF(0) has three main subunits: a(1), b(2) and c(9-12). The alpha and beta chains form an alternating ring which encloses part of the gamma chain. CF(1) is attached to CF(0) by a central stalk formed by the gamma and epsilon chains, while a peripheral stalk is formed by the delta and b chains.

It is found in the cell inner membrane. It catalyses the reaction ATP + H2O + 4 H(+)(in) = ADP + phosphate + 5 H(+)(out). Produces ATP from ADP in the presence of a proton gradient across the membrane. The alpha chain is a regulatory subunit. In Haemophilus influenzae (strain PittEE), this protein is ATP synthase subunit alpha.